The primary structure comprises 1070 residues: DNA-directed RNA polymerase subunit beta (1070 aa).

The protein belongs to the RNA polymerase beta chain family. As to quaternary structure, in plastids the minimal PEP RNA polymerase catalytic core is composed of four subunits: alpha, beta, beta', and beta''. When a (nuclear-encoded) sigma factor is associated with the core the holoenzyme is formed, which can initiate transcription.

Its subcellular location is the plastid. It localises to the chloroplast. It carries out the reaction RNA(n) + a ribonucleoside 5'-triphosphate = RNA(n+1) + diphosphate. Its function is as follows. DNA-dependent RNA polymerase catalyzes the transcription of DNA into RNA using the four ribonucleoside triphosphates as substrates. The sequence is that of DNA-directed RNA polymerase subunit beta from Nicotiana tomentosiformis (Tobacco).